The chain runs to 48 residues: ATP synthase protein 8 (48 aa).

A helical membrane pass occupies residues 12 to 32 (LLTGGILAISLLLYFVATYLL).

It belongs to the ATPase protein 8 family. In terms of assembly, F-type ATPases have 2 components, CF(1) - the catalytic core - and CF(0) - the membrane proton channel.

It localises to the mitochondrion membrane. Its function is as follows. Mitochondrial membrane ATP synthase (F(1)F(0) ATP synthase or Complex V) produces ATP from ADP in the presence of a proton gradient across the membrane which is generated by electron transport complexes of the respiratory chain. F-type ATPases consist of two structural domains, F(1) - containing the extramembraneous catalytic core and F(0) - containing the membrane proton channel, linked together by a central stalk and a peripheral stalk. During catalysis, ATP synthesis in the catalytic domain of F(1) is coupled via a rotary mechanism of the central stalk subunits to proton translocation. Part of the complex F(0) domain. Minor subunit located with subunit a in the membrane. In Candida parapsilosis (Yeast), this protein is ATP synthase protein 8 (ATP8).